We begin with the raw amino-acid sequence, 68 residues long: UPF0253 protein VF_0662 (68 aa).

It belongs to the UPF0253 family.

The polypeptide is UPF0253 protein VF_0662 (Aliivibrio fischeri (strain ATCC 700601 / ES114) (Vibrio fischeri)).